The following is a 241-amino-acid chain: Homeobox protein TGIF2LX (241 aa).

2 disordered regions span residues 1-58 and 126-210; these read MEAA…GNLP and TGKD…SPEE. The segment covering 21-39 has biased composition (polar residues); the sequence is AKTQSPAQDTSIMSRNNAD. A DNA-binding region (homeobox; TALE-type) is located at residues 48 to 111; that stretch reads EHKKKRKGNL…INARRRILPD (64 aa). A compositionally biased stretch (low complexity) spans 195-206; that stretch reads VSVTSPSSPELV.

Belongs to the TALE/TGIF homeobox family. Specifically expressed in adult testis.

The protein localises to the nucleus. Its function is as follows. May have a transcription role in testis. This is Homeobox protein TGIF2LX (TGIF2LX) from Homo sapiens (Human).